Here is a 130-residue protein sequence, read N- to C-terminus: Protein ApaG (130 aa).

Residues serine 3–arginine 127 form the ApaG domain.

The polypeptide is Protein ApaG (Parvibaculum lavamentivorans (strain DS-1 / DSM 13023 / NCIMB 13966)).